Here is a 527-residue protein sequence, read N- to C-terminus: Pentatricopeptide repeat-containing protein At4g25270, chloroplastic (527 aa).

A chloroplast-targeting transit peptide spans 1-47 (MVSIVVHKPSFSYPSVSSSSMKKKPRHHQQLKQHRQNQYNNNGFTSL). The disordered stretch occupies residues 12 to 44 (SYPSVSSSSMKKKPRHHQQLKQHRQNQYNNNGF). A compositionally biased stretch (basic residues) spans 21–35 (MKKKPRHHQQLKQHR). 10 PPR repeats span residues 126–156 (NLGISSKLVRLYASCGYAEVAHEVFDRMSKR), 159–193 (SPFAWNSLISGYAELGQYEDAMALYFQMAEDGVKP), 194–228 (DRFTFPRVLKACGGIGSVQIGEAIHRDLVKEGFGY), 229–259 (DVYVLNALVVMYAKCGDIVKARNVFDMIPHK), 260–294 (DYVSWNSMLTGYLHHGLLHEALDIFRLMVQNGIEP), 295–326 (DKVAISSVLARVLSFKHGRQLHGWVIRRGMEW), 327–361 (ELSVANALIVLYSKRGQLGQACFIFDQMLERDTVS), 367–389 (SAHSKNSNGLKYFEQMHRANAKP), 390–425 (DGITFVSVLSLCANTGMVEDGERLFSLMSKEYGIDP), and 426–457 (KMEHYACMVNLYGRAGMMEEAYSMIVQEMGLE). The type E motif; degenerate stretch occupies residues 462–527 (VWGALLYACY…QMMVDRGLET (66 aa)).

Belongs to the PPR family. PCMP-E subfamily.

It is found in the plastid. The protein localises to the chloroplast. In Arabidopsis thaliana (Mouse-ear cress), this protein is Pentatricopeptide repeat-containing protein At4g25270, chloroplastic (PCMP-E53).